A 657-amino-acid chain; its full sequence is Acetyl-coenzyme A synthetase (657 aa).

Residues 192 to 195 (RRGK) and Thr-311 each bind CoA. ATP-binding positions include 387-389 (GEP), 411-416 (DTWWQT), Asp-504, Arg-519, and Arg-530. His-543 and Val-546 together coordinate Mg(2+). Residue Arg-592 participates in CoA binding. An N6-acetyllysine modification is found at Lys-617.

This sequence belongs to the ATP-dependent AMP-binding enzyme family. Requires Mg(2+) as cofactor. Acetylated. Deacetylation by the SIR2-homolog deacetylase activates the enzyme.

The enzyme catalyses acetate + ATP + CoA = acetyl-CoA + AMP + diphosphate. Its function is as follows. Catalyzes the conversion of acetate into acetyl-CoA (AcCoA), an essential intermediate at the junction of anabolic and catabolic pathways. AcsA undergoes a two-step reaction. In the first half reaction, AcsA combines acetate with ATP to form acetyl-adenylate (AcAMP) intermediate. In the second half reaction, it can then transfer the acetyl group from AcAMP to the sulfhydryl group of CoA, forming the product AcCoA. In Campylobacter jejuni subsp. jejuni serotype O:6 (strain 81116 / NCTC 11828), this protein is Acetyl-coenzyme A synthetase.